A 393-amino-acid chain; its full sequence is Adaptive-response sensory kinase SasA (393 aa).

Positions 171 to 393 (MLAHDLRSPL…CFHFTLPVFR (223 aa)) constitute a Histidine kinase domain. Position 174 is a phosphohistidine; by autocatalysis (H174).

In terms of assembly, homooligomerizes. Interacts with KaiC. Participates in the KaiABC clock complex, whose core is composed of a KaiC homohexamer, 6 KaiB and up to 6 KaiA dimers. SasA and KaiB(fs) compete to bind to KaiC.

It carries out the reaction ATP + protein L-histidine = ADP + protein N-phospho-L-histidine.. Its function is as follows. Member of the two-component regulatory system SasA/RpaA involved in genome-wide circadian gene expression. One of several clock output pathways. Participates in the Kai clock protein complex, the main circadian regulator in cyanobacteria, via its interaction with KaiC. KaiC enhances the autophosphorylation activity of SasA, which then transfers its phosphate group to RpaA to activate it. In addition to its output function, recruits fold-shifted KaiB (KaiB(fs)) to KaiC to cooperatively form the KaiB(6):KaiC(6) complex (independent of SasA kinase activity). Required for robustness of the circadian rhythm of gene expression and is involved in clock output, also required for adaptation to light/dark cycles. This Gloeothece citriformis (strain PCC 7424) (Cyanothece sp. (strain PCC 7424)) protein is Adaptive-response sensory kinase SasA.